Consider the following 206-residue polypeptide: Ribosomal RNA large subunit methyltransferase E (206 aa).

Gly60, Trp62, Asp80, Asp96, and Asp121 together coordinate S-adenosyl-L-methionine. Catalysis depends on Lys161, which acts as the Proton acceptor.

Belongs to the class I-like SAM-binding methyltransferase superfamily. RNA methyltransferase RlmE family.

The protein resides in the cytoplasm. The catalysed reaction is uridine(2552) in 23S rRNA + S-adenosyl-L-methionine = 2'-O-methyluridine(2552) in 23S rRNA + S-adenosyl-L-homocysteine + H(+). Specifically methylates the uridine in position 2552 of 23S rRNA at the 2'-O position of the ribose in the fully assembled 50S ribosomal subunit. The sequence is that of Ribosomal RNA large subunit methyltransferase E from Nitrosomonas europaea (strain ATCC 19718 / CIP 103999 / KCTC 2705 / NBRC 14298).